A 232-amino-acid polypeptide reads, in one-letter code: Large ribosomal subunit protein uL1 (232 aa).

This sequence belongs to the universal ribosomal protein uL1 family. Part of the 50S ribosomal subunit.

Its function is as follows. Binds directly to 23S rRNA. The L1 stalk is quite mobile in the ribosome, and is involved in E site tRNA release. In terms of biological role, protein L1 is also a translational repressor protein, it controls the translation of the L11 operon by binding to its mRNA. The protein is Large ribosomal subunit protein uL1 of Chlamydia trachomatis serovar L2 (strain ATCC VR-902B / DSM 19102 / 434/Bu).